The sequence spans 620 residues: NADPH-dependent diflavin oxidoreductase 1 (620 aa).

One can recognise a Flavodoxin-like domain in the interval 6-168; that stretch reads IAILYGSETG…VYSEFEKRVL (163 aa). FMN-binding positions include 12–17, 59–62, and 106–115; these read SETGTA, STTG, and LGDSSYSKFN. The region spanning 222–475 is the FAD-binding FR-type domain; it reads SSVKYGTVVT…LLPAGKQDRP (254 aa). Residues R380, 410-413, and 442-445 each bind FAD; these read RFFS and GLCT. An NADP(+)-binding site is contributed by 535–536; it reads SR. An FAD-binding site is contributed by W620.

It belongs to the NADPH-dependent diflavin oxidoreductase NDOR1 family. The protein in the N-terminal section; belongs to the flavodoxin family. In the C-terminal section; belongs to the flavoprotein pyridine nucleotide cytochrome reductase family. As to quaternary structure, interacts with DRE2; as part of the cytosolic iron-sulfur (Fe-S) protein assembly (CIA) machinery. FAD is required as a cofactor. The cofactor is FMN.

The protein localises to the cytoplasm. Its subcellular location is the mitochondrion. The enzyme catalyses 2 oxidized [2Fe-2S]-[protein] + NADPH = 2 reduced [2Fe-2S]-[protein] + NADP(+) + H(+). Its function is as follows. NADPH-dependent reductase which is a central component of the cytosolic iron-sulfur (Fe-S) protein assembly (CIA) machinery. Transfers electrons from NADPH via its FAD and FMN prosthetic groups to the [2Fe-2S] cluster of DRE2, another key component of the CIA machinery. In turn, this reduced cluster provides electrons for assembly of cytosolic iron-sulfur cluster proteins. Positively controls H(2)O(2)-induced cell death. The polypeptide is NADPH-dependent diflavin oxidoreductase 1 (Eremothecium gossypii (strain ATCC 10895 / CBS 109.51 / FGSC 9923 / NRRL Y-1056) (Yeast)).